Here is a 104-residue protein sequence, read N- to C-terminus: uncharacterized protein (104 aa).

The protein belongs to the BolA/IbaG family.

This is an uncharacterized protein from Buchnera aphidicola subsp. Acyrthosiphon pisum (strain APS) (Acyrthosiphon pisum symbiotic bacterium).